The primary structure comprises 541 residues: Calcium-dependent protein kinase 25 (541 aa).

The span at 1–11 (MGQCCTGGGKA) shows a compositional bias: gly residues. The interval 1 to 74 (MGQCCTGGGK…AGPIGEVLER (74 aa)) is disordered. Gly-2 is lipidated: N-myristoyl glycine. Positions 38 to 67 (AKQQPCSPAAKAAATEAAAAASSSKKPAGP) are enriched in low complexity. Residues 83–341 (YSIGKELGRG…AFQVLNHPWI (259 aa)) form the Protein kinase domain. Residues 89 to 97 (LGRGQFGVT) and Lys-112 each bind ATP. Asp-207 serves as the catalytic Proton acceptor. An autoinhibitory domain region spans residues 347 to 377 (APDVPLDNVVLNRLKQFRAMNQFKKAALRII). 4 consecutive EF-hand domains span residues 384-419 (EEIK…QGTK), 420-455 (FSDN…MNKM), 456-491 (DREE…QGLY), and 493-526 (ANEI…GSGC). Residues Asp-397, Asp-399, Ser-401, Thr-403, Glu-408, Asp-433, Asp-435, Asn-437, Glu-444, Asp-469, Asp-471, Ser-473, Tyr-475, Glu-480, Asp-504, Asn-506, Asp-508, Arg-510, and Glu-515 each contribute to the Ca(2+) site.

This sequence belongs to the protein kinase superfamily. Ser/Thr protein kinase family. CDPK subfamily. In terms of tissue distribution, specifically expressed in heading panicles, spikelets and mature pollen grains. Not expressed in vegetative tissues.

The protein localises to the membrane. It carries out the reaction L-seryl-[protein] + ATP = O-phospho-L-seryl-[protein] + ADP + H(+). The catalysed reaction is L-threonyl-[protein] + ATP = O-phospho-L-threonyl-[protein] + ADP + H(+). Its activity is regulated as follows. Activated by calcium. Autophosphorylation may play an important role in the regulation of the kinase activity. In terms of biological role, may play a role in signal transduction pathways that involve calcium as a second messenger. The sequence is that of Calcium-dependent protein kinase 25 from Oryza sativa subsp. japonica (Rice).